The primary structure comprises 271 residues: Glutamate racemase (271 aa).

Residues 10–11 (DS) and 42–43 (YG) contribute to the substrate site. The active-site Proton donor/acceptor is the C74. Residue 75-76 (NT) participates in substrate binding. The active-site Proton donor/acceptor is the C189. 190 to 191 (TH) is a substrate binding site.

It belongs to the aspartate/glutamate racemases family.

The catalysed reaction is L-glutamate = D-glutamate. It functions in the pathway cell wall biogenesis; peptidoglycan biosynthesis. Provides the (R)-glutamate required for cell wall biosynthesis. The chain is Glutamate racemase from Bartonella bacilliformis (strain ATCC 35685 / KC583 / Herrer 020/F12,63).